The chain runs to 966 residues: Collagen alpha-1(I) chain (966 aa).

A disordered region spans residues 1–966; the sequence is SYGYDEKSAG…PGPPGPPGPP (966 aa). K7 carries the allysine modification. S8 carries the post-translational modification Phosphoserine. 4-hydroxyproline occurs at positions 27, 30, 32, 41, 44, 47, 61, 76, 82, 91, and 97. Residues 64–78 show a composition bias toward basic and acidic residues; sequence NGDDGEAGKPGRPGE. Residue K100 is modified to 5-hydroxylysine; alternate. O-linked (Gal...) hydroxylysine; alternate glycosylation occurs at K100. S106 bears the Phosphoserine mark. Over residues 114 to 130 the composition is skewed to low complexity; sequence DAGPAGPKGEPGSPGEN. P124, P127, P133, P142, P148, P169, P178, P181, P208, P211, P223, P229, P238, P244, P247, and P262 each carry 4-hydroxyproline. The span at 148-166 shows a compositional bias: low complexity; sequence PGASGPAGARGNDGATGAA. Residues 168–180 show a composition bias toward pro residues; it reads PPGPTGPAGPPGF. The segment covering 214–253 has biased composition (low complexity); it reads AGAAGPAGNPGADGQPGAKGANGAPGIAGAPGFPGARGPS. At K265 the chain carries 5-hydroxylysine. 4-hydroxyproline is present on residues P271, P274, P286, P295, P310, P316, P325, and P331. Positions 320–329 are enriched in gly residues; the sequence is GERGGPGSRG. K340 carries the 5-hydroxylysine modification. P349, P358, P364, P370, P379, P382, P391, P400, P406, P418, P427, P436, P439, P457, P475, P481, P487, P493, P499, P505, P517, P526, P538, P542, P548, P554, and P563 each carry 4-hydroxyproline. The segment covering 373–399 has biased composition (low complexity); sequence KGLTGSPGSPGPDGKTGPPGPAGQDGR. The segment covering 408–427 has biased composition (low complexity); that stretch reads ARGQAGVMGFPGPKGAAGEP. Low complexity predominate over residues 469 to 496; it reads QGPAGSPGFQGLPGPAGPPGEAGKPGEQ. K575 is subject to 5-hydroxylysine. P581, P596, and P602 each carry 4-hydroxyproline. Over residues 608 to 622 the composition is skewed to low complexity; it reads SGPSGPAGPTGARGA. The residue at position 611 (S611) is a Phosphoserine. 4-hydroxyproline occurs at positions 623, 629, 632, 641, 647, 665, 674, and 683. The segment covering 635 to 662 has biased composition (low complexity); sequence AGFAGPPGADGQPGAKGEPGDAGAKGDA. Residues 664-676 are compositionally biased toward pro residues; that stretch reads PPGPAGPTGPPGP. K686 carries the post-translational modification 5-hydroxylysine. The span at 691 to 707 shows a compositional bias: low complexity; it reads SAGPPGATGFPGAAGRV. 4-hydroxyproline is present on residues P695 and P701. P709 carries the 3-hydroxyproline modification. 4-hydroxyproline occurs at positions 710, 719, 722, 746, 755, 773, 782, 785, 791, 806, 812, 818, 826, and 832. Positions 736-755 are enriched in low complexity; sequence ETGPAGEKGSPGADGPAGAP. Pro residues predominate over residues 805 to 815; the sequence is PPGPVGPPGLA. A compositionally biased stretch (gly residues) spans 824-835; that stretch reads EGPGAEGSPGRG. Over residues 852–866 the composition is skewed to low complexity; it reads AGPAGARGPAGPQGP. Basic and acidic residues predominate over residues 867 to 881; sequence RGDKGETGEQGDRGI. K870 is modified (5-hydroxylysine). Position 882 is a 5-hydroxylysine; alternate (K882). K882 is a glycosylation site (O-linked (Gal...) hydroxylysine; alternate). Residues P897, P900, P918, and P933 each carry the 4-hydroxyproline modification. Residues 900–933 show a composition bias toward low complexity; it reads PGEQGPSGASGPAGPRGPPGSAGSPGKDGLNGLP. A 3-hydroxyproline modification is found at P938. The residue at position 939 (P939) is a 4-hydroxyproline. Over residues 951-966 the composition is skewed to pro residues; the sequence is VGPPGPPGPPGPPGPP. P953 carries the post-translational modification 3-hydroxyproline. The residue at position 954 (P954) is a 4-hydroxyproline. P956 is modified (3-hydroxyproline). P957 bears the 4-hydroxyproline mark. P959 is subject to 3-hydroxyproline. 4-hydroxyproline occurs at positions 960, 963, and 966.

It belongs to the fibrillar collagen family. As to quaternary structure, trimers of one alpha 2(I) and two alpha 1(I) chains. Post-translationally, contains mostly 4-hydroxyproline. Proline residues at the third position of the tripeptide repeating unit (G-X-Y) are hydroxylated in some or all of the chains. In terms of processing, contains 3-hydroxyproline at a few sites. This modification occurs on the first proline residue in the sequence motif Gly-Pro-Hyp, where Hyp is 4-hydroxyproline. Lysine residues at the third position of the tripeptide repeating unit (G-X-Y) are 5-hydroxylated in some or all of the chains. Post-translationally, O-glycosylated on hydroxylated lysine residues. The O-linked glycan consists of a Glc-Gal disaccharide. Expressed in bones.

It is found in the secreted. It localises to the extracellular space. The protein resides in the extracellular matrix. Its function is as follows. Type I collagen is a member of group I collagen (fibrillar forming collagen). This chain is Collagen alpha-1(I) chain, found in Bradypus variegatus (Brown-throated three-fingered sloth).